We begin with the raw amino-acid sequence, 429 residues long: Enolase (429 aa).

Residue Q162 coordinates (2R)-2-phosphoglycerate. The Proton donor role is filled by E204. 3 residues coordinate Mg(2+): D242, E289, and D316. Residues K341, R370, S371, and K392 each coordinate (2R)-2-phosphoglycerate. K341 serves as the catalytic Proton acceptor.

The protein belongs to the enolase family. Mg(2+) serves as cofactor.

It localises to the cytoplasm. Its subcellular location is the secreted. It is found in the cell surface. The enzyme catalyses (2R)-2-phosphoglycerate = phosphoenolpyruvate + H2O. It functions in the pathway carbohydrate degradation; glycolysis; pyruvate from D-glyceraldehyde 3-phosphate: step 4/5. Its function is as follows. Catalyzes the reversible conversion of 2-phosphoglycerate (2-PG) into phosphoenolpyruvate (PEP). It is essential for the degradation of carbohydrates via glycolysis. The chain is Enolase from Flavobacterium psychrophilum (strain ATCC 49511 / DSM 21280 / CIP 103535 / JIP02/86).